The sequence spans 375 residues: N-acetyldiaminopimelate deacetylase (375 aa).

The active site involves Asp69. The active-site Proton acceptor is the Glu128.

This sequence belongs to the peptidase M20A family. N-acetyldiaminopimelate deacetylase subfamily.

It carries out the reaction N-acetyl-(2S,6S)-2,6-diaminopimelate + H2O = (2S,6S)-2,6-diaminopimelate + acetate. It participates in amino-acid biosynthesis; L-lysine biosynthesis via DAP pathway; LL-2,6-diaminopimelate from (S)-tetrahydrodipicolinate (acetylase route): step 3/3. Its function is as follows. Catalyzes the conversion of N-acetyl-diaminopimelate to diaminopimelate and acetate. This is N-acetyldiaminopimelate deacetylase from Streptococcus suis (strain 05ZYH33).